The sequence spans 365 residues: 5-hydroxytryptamine receptor 1F (365 aa).

At 1 to 24 (MDFLNSSDQNLTSEELLNRMPSKI) the chain is on the extracellular side. 2 N-linked (GlcNAc...) asparagine glycosylation sites follow: asparagine 5 and asparagine 10. Residues 25-49 (LVSLTLSGLALMTTTINSLVIAAII) traverse the membrane as a helical segment. Over 50 to 59 (VTRKLHHPAN) the chain is Cytoplasmic. Residues 60–81 (YLICSLAVTDFLVAVLVMPFSI) traverse the membrane as a helical segment. The Extracellular portion of the chain corresponds to 82-96 (VYIVRESWIMGQVVC). Cysteine 96 and cysteine 172 are disulfide-bonded. The chain crosses the membrane as a helical span at residues 97–119 (DIWLSVDITCCTCSILHLSAIAL). 2 residues coordinate serotonin: aspartate 103 and cysteine 107. A DRY motif; important for ligand-induced conformation changes motif is present at residues 120–122 (DRY). Over 120 to 139 (DRYRAITDAVEYARKRTPKH) the chain is Cytoplasmic. The chain crosses the membrane as a helical span at residues 140-159 (AGIMITIVWIISVFISMPPL). Over 160–178 (FWRHQGTSRDDECIIKHDH) the chain is Extracellular. The chain crosses the membrane as a helical span at residues 179 to 202 (IVSTIYSTFGAFYIPLALILILYY). Residues 203–291 (KIYRAAKTLY…KISGTRERKA (89 aa)) are Cytoplasmic-facing. The chain crosses the membrane as a helical span at residues 292 to 315 (ATTLGLILGAFVICWLPFFVKELV). Over 316-327 (VNVCDKCKISEE) the chain is Extracellular. A helical membrane pass occupies residues 328-350 (MSNFLAWLGYLNSLINPLIYTIF). Residues 343 to 347 (NPLIY) carry the NPxxY motif; important for ligand-induced conformation changes and signaling motif. Residues 351–365 (NEDFKKAFQKLVRCR) are Cytoplasmic-facing.

Belongs to the G-protein coupled receptor 1 family.

The protein resides in the cell membrane. In terms of biological role, G-protein coupled receptor for 5-hydroxytryptamine (serotonin). Also functions as a receptor for various alkaloids and psychoactive substances. Ligand binding causes a conformation change that triggers signaling via guanine nucleotide-binding proteins (G proteins) and modulates the activity of downstream effectors, such as adenylate cyclase. HTR1F is coupled to G(i)/G(o) G alpha proteins and mediates inhibitory neurotransmission by inhibiting adenylate cyclase activity. The chain is 5-hydroxytryptamine receptor 1F (HTR1F) from Pan troglodytes (Chimpanzee).